Here is a 359-residue protein sequence, read N- to C-terminus: ATP synthase subunit gamma, chloroplastic (359 aa).

A chloroplast-targeting transit peptide spans 1–35; sequence MSCSHLSTAWSSSALASSASTTRRRSPPRSGLLVR. The active site involves C124. An intrachain disulfide couples C234 to C240.

It belongs to the ATPase gamma chain family. F-type ATPases have 2 components, CF(1) - the catalytic core - and CF(0) - the membrane proton channel. CF(1) has five subunits: alpha(3), beta(3), gamma(1), delta(1), epsilon(1). CF(0) has four main subunits: a, b, b' and c.

Its subcellular location is the plastid. It localises to the chloroplast thylakoid membrane. Its function is as follows. Produces ATP from ADP in the presence of a proton gradient across the membrane. The gamma chain is believed to be important in regulating ATPase activity and the flow of protons through the CF(0) complex. In terms of biological role, inceptin is a proteolytic fragment produced by insect larvae that previously ingested the protein. This peptide mediate plant perception of herbivory through the induction of volatile, phenylpropanoid and protease inhibitor defenses such as ethylene, jasmonic acid and salicylic acid for example. This is ATP synthase subunit gamma, chloroplastic from Zea mays (Maize).